The chain runs to 498 residues: ATP synthase subunit beta, chloroplastic (498 aa).

ATP is bound at residue 172–179 (GGAGVGKT).

This sequence belongs to the ATPase alpha/beta chains family. In terms of assembly, F-type ATPases have 2 components, CF(1) - the catalytic core - and CF(0) - the membrane proton channel. CF(1) has five subunits: alpha(3), beta(3), gamma(1), delta(1), epsilon(1). CF(0) has four main subunits: a(1), b(1), b'(1) and c(9-12).

The protein resides in the plastid. It is found in the chloroplast thylakoid membrane. The enzyme catalyses ATP + H2O + 4 H(+)(in) = ADP + phosphate + 5 H(+)(out). Its function is as follows. Produces ATP from ADP in the presence of a proton gradient across the membrane. The catalytic sites are hosted primarily by the beta subunits. This Drimys granadensis protein is ATP synthase subunit beta, chloroplastic.